The chain runs to 215 residues: Small ribosomal subunit protein uS5 (215 aa).

Polar residues predominate over residues 1–11 (MTDSSPQSNPN). A disordered region spans residues 1–61 (MTDSSPQSNP…GQDRDSEWQE (61 aa)). Low complexity predominate over residues 12–28 (AVPGAADVPAAAQGQQQ). The span at 39 to 61 (RGDRRGDRRGGRRGQDRDSEWQE) shows a compositional bias: basic and acidic residues. The region spanning 59–122 (WQERVVQIRR…ADGKKHLVKV (64 aa)) is the S5 DRBM domain.

It belongs to the universal ribosomal protein uS5 family. As to quaternary structure, part of the 30S ribosomal subunit. Contacts proteins S4 and S8.

Functionally, with S4 and S12 plays an important role in translational accuracy. Located at the back of the 30S subunit body where it stabilizes the conformation of the head with respect to the body. This is Small ribosomal subunit protein uS5 from Synechococcus sp. (strain CC9902).